Reading from the N-terminus, the 203-residue chain is Recombination protein RecR (203 aa).

The C4-type zinc-finger motif lies at 56 to 71 (CAVCGNVSDEERCRIC). The 101-residue stretch at 79–179 (SLICVVEEPK…TVTRIASGLP (101 aa)) folds into the Toprim domain.

Belongs to the RecR family.

May play a role in DNA repair. It seems to be involved in an RecBC-independent recombinational process of DNA repair. It may act with RecF and RecO. The sequence is that of Recombination protein RecR from Mycolicibacterium vanbaalenii (strain DSM 7251 / JCM 13017 / BCRC 16820 / KCTC 9966 / NRRL B-24157 / PYR-1) (Mycobacterium vanbaalenii).